Consider the following 531-residue polypeptide: DNA damage-binding protein cmr1 (531 aa).

Disordered regions lie at residues 37-83 (GIFP…RGIA) and 218-264 (DASQ…MHIH). Over residues 53–64 (KPKKKPAPKKIK) the composition is skewed to basic residues. One copy of the WD 1 repeat lies at 186–227 (VTPERIYTMTFHPSEAKPLIFAGDKMGNLGVLDASQERPVSS). Positions 233–245 (GDEEEQEDDDDPD) are enriched in acidic residues. WD repeat units follow at residues 253-293 (PHTR…SVET), 300-340 (SDDV…RTAV), 345-385 (LSEK…HDDP), 392-431 (LSRLSVSHAAFNSAGQVATSSYDDSLKIYDFGAKGIASWE), 454-497 (GRWV…LAQL), and 500-531 (DGITAVPAVAVFHRSKNWIAGGTASGKICLWM).

It belongs to the WD repeat DDB2/WDR76 family.

In terms of biological role, DNA-binding protein that binds to both single- and double-stranded DNA. Binds preferentially to UV-damaged DNA. May be involved in DNA-metabolic processes. In Aspergillus clavatus (strain ATCC 1007 / CBS 513.65 / DSM 816 / NCTC 3887 / NRRL 1 / QM 1276 / 107), this protein is DNA damage-binding protein cmr1.